A 432-amino-acid chain; its full sequence is Fibrinogen gamma chain (432 aa).

The first 24 residues, 1-24, serve as a signal peptide directing secretion; sequence MGRIGTPVFLAFLSALTCSLQVHA. One can recognise a Fibrinogen C-terminal domain in the interval 169-412; that stretch reads KISPITGKDC…MTTMKLLPMG (244 aa). A disulfide bond links C178 and C207. Residue N227 is glycosylated (N-linked (GlcNAc...) asparagine). 4 residues coordinate Ca(2+): D340, D342, Y344, and G346. C348 and C361 are disulfide-bonded. The disordered stretch occupies residues 413–432; sequence RDLSGHGGQQQSKGNSRGDN. Residues 421–432 show a composition bias toward polar residues; it reads QQQSKGNSRGDN.

As to quaternary structure, heterohexamer; disulfide linked. Contains 2 sets of 3 non-identical chains (alpha, beta and gamma). The 2 heterotrimers are in head to head conformation with the N-termini in a small central domain. Post-translationally, conversion of fibrinogen to fibrin is triggered by thrombin, which cleaves fibrinopeptides A and B from alpha and beta chains, and thus exposes the N-terminal polymerization sites responsible for the formation of the soft clot. The soft clot is converted into the hard clot by factor XIIIA which catalyzes the epsilon-(gamma-glutamyl)lysine cross-linking between gamma chains (stronger) and between alpha chains (weaker) of different monomers.

The protein localises to the secreted. Its function is as follows. Together with fibrinogen alpha (FGA) and fibrinogen beta (FGB), polymerizes to form an insoluble fibrin matrix. Has a major function in hemostasis as one of the primary components of blood clots. The chain is Fibrinogen gamma chain (FGG) from Petromyzon marinus (Sea lamprey).